Consider the following 371-residue polypeptide: Cytochrome b (371 aa).

A run of 4 helical transmembrane segments spans residues 25–45 (FGSMLLTCSALQVMTGFSLSM), 69–90 (WVMQNLHAIGASMFFICIYMYI), 105–125 (WLSGTTLLIMLMATAFFGYVL), and 170–190 (FFALHFILPFGIISVSSIHIM). Heme b is bound at residue His-75. Positions 174 and 188 each coordinate heme b. His-193 serves as a coordination point for a ubiquinone. 4 helical membrane-spanning segments follow: residues 218–238 (YKDILMISIMIITLLLTVSFF), 280–300 (LGGALALVMSIMILFTMPFTH), 312–332 (LMQFMFWTLVATFVIITWTAT), and 339–358 (FTTISQVASIIYFTFFMSNP).

The protein belongs to the cytochrome b family. In terms of assembly, the cytochrome bc1 complex contains 3 respiratory subunits (MT-CYB, CYC1 and UQCRFS1), 2 core proteins (UQCRC1 and UQCRC2) and probably 6 low-molecular weight proteins. Heme b is required as a cofactor.

The protein localises to the mitochondrion inner membrane. Its function is as follows. Component of the ubiquinol-cytochrome c reductase complex (complex III or cytochrome b-c1 complex) that is part of the mitochondrial respiratory chain. The b-c1 complex mediates electron transfer from ubiquinol to cytochrome c. Contributes to the generation of a proton gradient across the mitochondrial membrane that is then used for ATP synthesis. In Candoia aspera (New Guinea boa), this protein is Cytochrome b (MT-CYB).